The chain runs to 377 residues: Nitric oxide reductase FlRd-NAD(+) reductase (377 aa).

The protein belongs to the FAD-dependent oxidoreductase family. Requires FAD as cofactor.

Its subcellular location is the cytoplasm. It carries out the reaction 2 reduced [nitric oxide reductase rubredoxin domain] + NAD(+) + H(+) = 2 oxidized [nitric oxide reductase rubredoxin domain] + NADH. It functions in the pathway nitrogen metabolism; nitric oxide reduction. Functionally, one of at least two accessory proteins for anaerobic nitric oxide (NO) reductase. Reduces the rubredoxin moiety of NO reductase. This is Nitric oxide reductase FlRd-NAD(+) reductase (norW) from Shigella boydii serotype 4 (strain Sb227).